Reading from the N-terminus, the 537-residue chain is MNLIEFPWLTAIIALPLVAALAIPIIPDKEGKTVRWYGLGVAFADFALMIAAFWHYYDFQSSTYQFVEKYHWLPQIGLNWSVAVDGLSMPLLLLTGLINTLAIFAAWKVTNKPRLFYGLMLVMYSAQLGVFVAQDLLLFFLMWEIELVPVYLLISIWGGPKRRYAATKFILYTAAASIFILVAGFALAFSGDTVTFDIAALGMKEYPKAIELLAYAGFLIAFGVKLPIFPLHTWLPDAHGEASAPGSMILAGVLLKMGGYALIRFNIEMLPDAHVYFAPVLAILGVVNIVYGACCAFAQTNLKRRLAYSSIAHMGFVLIGLASYTEIGVSGAVLQMVSHGLVAASLFFLTGVTYERTHTLLMDKMGGIGKVMPKTFALYTAGAMASLALPGMSGFVGELMVFIGIATSDVYSSSFKVVVVLLSAVGVILTPIYLLSLLRQVFYGKQSEELHLDAFIPDVKPRELFITASLLLPIIGIGLYPKLITQTYDVKTVEIAAHARQVLPVVAGQQPSSLYSQIFTAPTLANAEVESLVNISK.

The next 13 membrane-spanning stretches (helical) occupy residues 6-26 (FPWL…IPII), 36-56 (WYGL…FWHY), 87-107 (LSMP…FAAW), 115-135 (LFYG…VAQD), 136-156 (LLLF…LISI), 169-189 (FILY…ALAF), 209-229 (AIEL…LPIF), 243-263 (SAPG…YALI), 277-297 (FAPV…CCAF), 314-334 (MGFV…GAVL), 335-355 (QMVS…VTYE), 387-407 (LALP…GIAT), and 417-437 (VVVV…LLSL).

It belongs to the complex I subunit 4 family.

The protein localises to the cellular thylakoid membrane. It catalyses the reaction a plastoquinone + NADH + (n+1) H(+)(in) = a plastoquinol + NAD(+) + n H(+)(out). The catalysed reaction is a plastoquinone + NADPH + (n+1) H(+)(in) = a plastoquinol + NADP(+) + n H(+)(out). Functionally, NDH-1 shuttles electrons from NAD(P)H, via FMN and iron-sulfur (Fe-S) centers, to quinones in the respiratory chain. The immediate electron acceptor for the enzyme in this species is believed to be plastoquinone. Couples the redox reaction to proton translocation (for every two electrons transferred, four hydrogen ions are translocated across the cytoplasmic membrane), and thus conserves the redox energy in a proton gradient. This is NAD(P)H-quinone oxidoreductase chain 4 3 from Trichormus variabilis (strain ATCC 29413 / PCC 7937) (Anabaena variabilis).